The sequence spans 369 residues: 3-dehydroquinate synthase (369 aa).

NAD(+)-binding positions include 70-75 (DAEDGK), 104-108 (GAATD), 128-129 (TT), Lys141, Lys150, and 168-171 (TLET). Positions 183, 246, and 262 each coordinate Zn(2+).

Belongs to the sugar phosphate cyclases superfamily. Dehydroquinate synthase family. It depends on Co(2+) as a cofactor. Zn(2+) is required as a cofactor. Requires NAD(+) as cofactor.

The protein localises to the cytoplasm. It carries out the reaction 7-phospho-2-dehydro-3-deoxy-D-arabino-heptonate = 3-dehydroquinate + phosphate. It participates in metabolic intermediate biosynthesis; chorismate biosynthesis; chorismate from D-erythrose 4-phosphate and phosphoenolpyruvate: step 2/7. In terms of biological role, catalyzes the conversion of 3-deoxy-D-arabino-heptulosonate 7-phosphate (DAHP) to dehydroquinate (DHQ). The sequence is that of 3-dehydroquinate synthase from Rhodococcus erythropolis (strain PR4 / NBRC 100887).